Here is a 160-residue protein sequence, read N- to C-terminus: SsrA-binding protein (160 aa).

Residues 133–160 (KKLHDKRETEKERDWNRQKSRLLKGNSQ) form a disordered region. Residues 137-149 (DKRETEKERDWNR) show a composition bias toward basic and acidic residues.

It belongs to the SmpB family.

Its subcellular location is the cytoplasm. Required for rescue of stalled ribosomes mediated by trans-translation. Binds to transfer-messenger RNA (tmRNA), required for stable association of tmRNA with ribosomes. tmRNA and SmpB together mimic tRNA shape, replacing the anticodon stem-loop with SmpB. tmRNA is encoded by the ssrA gene; the 2 termini fold to resemble tRNA(Ala) and it encodes a 'tag peptide', a short internal open reading frame. During trans-translation Ala-aminoacylated tmRNA acts like a tRNA, entering the A-site of stalled ribosomes, displacing the stalled mRNA. The ribosome then switches to translate the ORF on the tmRNA; the nascent peptide is terminated with the 'tag peptide' encoded by the tmRNA and targeted for degradation. The ribosome is freed to recommence translation, which seems to be the essential function of trans-translation. The chain is SsrA-binding protein from Agrobacterium fabrum (strain C58 / ATCC 33970) (Agrobacterium tumefaciens (strain C58)).